A 346-amino-acid chain; its full sequence is Elongation factor Ts (346 aa).

An involved in Mg(2+) ion dislocation from EF-Tu region spans residues 80-83 (TDFV).

Belongs to the EF-Ts family.

Its subcellular location is the cytoplasm. Associates with the EF-Tu.GDP complex and induces the exchange of GDP to GTP. It remains bound to the aminoacyl-tRNA.EF-Tu.GTP complex up to the GTP hydrolysis stage on the ribosome. The protein is Elongation factor Ts of Streptococcus agalactiae serotype Ia (strain ATCC 27591 / A909 / CDC SS700).